The sequence spans 148 residues: Large ribosomal subunit protein uL13 (148 aa).

This sequence belongs to the universal ribosomal protein uL13 family. As to quaternary structure, part of the 50S ribosomal subunit.

Its function is as follows. This protein is one of the early assembly proteins of the 50S ribosomal subunit, although it is not seen to bind rRNA by itself. It is important during the early stages of 50S assembly. This Ureaplasma parvum serovar 3 (strain ATCC 27815 / 27 / NCTC 11736) protein is Large ribosomal subunit protein uL13.